The sequence spans 315 residues: Putative 2-hydroxyacid dehydrogenase HI_1556 (315 aa).

Residues Thr-73, 156-157 (CL), 231-233 (TGR), and Asp-257 contribute to the NAD(+) site. Arg-233 is an active-site residue. Residue Glu-262 is part of the active site. His-285 (proton donor) is an active-site residue. 285–288 (HIAW) provides a ligand contact to NAD(+).

The protein belongs to the D-isomer specific 2-hydroxyacid dehydrogenase family.

The polypeptide is Putative 2-hydroxyacid dehydrogenase HI_1556 (Haemophilus influenzae (strain ATCC 51907 / DSM 11121 / KW20 / Rd)).